A 371-amino-acid polypeptide reads, in one-letter code: Phosphatase IMPL1, chloroplastic (371 aa).

A chloroplast-targeting transit peptide spans 1 to 60 (MGRSLIFSGNMSLRISHLPRSSLPLQNPISGRTVNRTFRYRCTRILSNSFKSTTRLQTKA). Val61 carries the N-acetylvaline modification. 4 residues coordinate Mg(2+): Glu148, Asp165, Leu167, and Asp168. Glu148 lines the substrate pocket. Substrate is bound by residues 167–170 (LDGT), 273–275 (GAA), Glu292, and Asp299. Asp299 contacts Mg(2+).

The protein belongs to the inositol monophosphatase superfamily. Requires Mg(2+) as cofactor. As to expression, ubiquitous. Expressed in pistil and seed endosperm.

It is found in the plastid. Its subcellular location is the chloroplast stroma. The catalysed reaction is a myo-inositol phosphate + H2O = myo-inositol + phosphate. Its pathway is polyol metabolism; myo-inositol biosynthesis; myo-inositol from D-glucose 6-phosphate: step 2/2. Functionally, phosphatase acting preferentially on D-myoinositol 1-phosphate (D-Ins 1-P). The chain is Phosphatase IMPL1, chloroplastic (IMPL1) from Arabidopsis thaliana (Mouse-ear cress).